The following is a 137-amino-acid chain: Putative pre-16S rRNA nuclease (137 aa).

The protein belongs to the YqgF nuclease family.

Its subcellular location is the cytoplasm. Its function is as follows. Could be a nuclease involved in processing of the 5'-end of pre-16S rRNA. The sequence is that of Putative pre-16S rRNA nuclease from Anaeromyxobacter sp. (strain Fw109-5).